Consider the following 406-residue polypeptide: S-adenosylmethionine synthase (406 aa).

140–145 lines the ATP pocket; it reads GRGSVD.

This sequence belongs to the AdoMet synthase 2 family. It depends on Mg(2+) as a cofactor.

The enzyme catalyses L-methionine + ATP + H2O = S-adenosyl-L-methionine + phosphate + diphosphate. It functions in the pathway amino-acid biosynthesis; S-adenosyl-L-methionine biosynthesis; S-adenosyl-L-methionine from L-methionine: step 1/1. Functionally, catalyzes the formation of S-adenosylmethionine from methionine and ATP. The protein is S-adenosylmethionine synthase (mat) of Aeropyrum pernix (strain ATCC 700893 / DSM 11879 / JCM 9820 / NBRC 100138 / K1).